The primary structure comprises 366 residues: CRS2-associated factor 2, mitochondrial (366 aa).

The transit peptide at 1 to 14 (MLLPRDLLLLPWRR) directs the protein to the mitochondrion. The interval 24–82 (RRLNHHRAPPFSDPDDDPPFTRLAERPPRAPSKKKKKEEEDQGGRIRPPEPASSDLPFD) is disordered. Basic and acidic residues predominate over residues 60–71 (KEEEDQGGRIRP). CRM domains follow at residues 143 to 241 (EPLA…QRPQ) and 263 to 359 (DGLT…SVSL).

Part of large ribonucleo-protein complexes that include group IIB introns.

It is found in the mitochondrion. Its function is as follows. May be involved in the splicing of group IIB introns in mitochondria. The chain is CRS2-associated factor 2, mitochondrial from Oryza sativa subsp. japonica (Rice).